The sequence spans 403 residues: MQRAMTVVPHLGLRLQALPLALGRPLSRAQDVLRRTPLYDFHLAHGGKMVAFAGWSLPVQYRDSHVDSHLHTRRHCSLFDVSHMLQTKILGCDRVKLMESLVVGDIAELRPNQGTLSLFTNEAGGIEDDLIVTSTSEGYLYVVSNAGCWDKDLALMQGKVRELQNMGSDVSLEVVDNALLALQGPTATQVLQAGVADDLRKLPFMTSAVMEVFGVSGCRVTRCGYTGEDGVEISVPAAAAVRLAAALLENPEVKLAGLAARDSLRLEAGLCLYGSDIDEHTTPVEGSLSWTLGKRRRAAMDFPGASVIIAQLKGKVQRRRVGLTCEGAPVRAHSPILNMEGTVIGTVTSGCPSPCLKKNVAMGYVPSEYSRPGTPLLVEVRRKQQMAVVSKMPFVTTNYYTLK.

The N-terminal 28 residues, 1–28 (MQRAMTVVPHLGLRLQALPLALGRPLSR), are a transit peptide targeting the mitochondrion. Substrate-binding residues include Glu232, Arg261, and Tyr399.

It belongs to the GcvT family. The glycine cleavage system is composed of four proteins: P, T, L and H.

The protein resides in the mitochondrion. It catalyses the reaction N(6)-[(R)-S(8)-aminomethyldihydrolipoyl]-L-lysyl-[protein] + (6S)-5,6,7,8-tetrahydrofolate = N(6)-[(R)-dihydrolipoyl]-L-lysyl-[protein] + (6R)-5,10-methylene-5,6,7,8-tetrahydrofolate + NH4(+). In terms of biological role, the glycine cleavage system catalyzes the degradation of glycine. In Canis lupus familiaris (Dog), this protein is Aminomethyltransferase, mitochondrial.